A 297-amino-acid polypeptide reads, in one-letter code: Hydroxysqualene synthase (297 aa).

Belongs to the phytoene/squalene synthase family. HpnC subfamily.

The catalysed reaction is presqualene diphosphate + H2O = hydroxysqualene + diphosphate. It functions in the pathway secondary metabolite biosynthesis; hopanoid biosynthesis. Its function is as follows. Involved in the biosynthesis of the hopanoid precursor squalene (SQ) from farnesyl diphosphate (FPP). Catalyzes the second step, the conversion of presqualene diphosphate (PSPP) to hydroxysqualene (HSQ). The protein is Hydroxysqualene synthase of Zymomonas mobilis subsp. mobilis (strain ATCC 31821 / ZM4 / CP4).